The primary structure comprises 360 residues: GDSL esterase/lipase At2g31550 (360 aa).

A signal peptide spans methionine 1–alanine 27. N-linked (GlcNAc...) asparagine glycosylation is present at asparagine 26. Serine 42 serves as the catalytic Nucleophile. 2 N-linked (GlcNAc...) asparagine glycosylation sites follow: asparagine 104 and asparagine 326. Residues aspartate 334 and histidine 337 contribute to the active site.

Belongs to the 'GDSL' lipolytic enzyme family.

Its subcellular location is the secreted. This Arabidopsis thaliana (Mouse-ear cress) protein is GDSL esterase/lipase At2g31550.